The chain runs to 268 residues: Protein APE_1980.1 (268 aa).

It belongs to the CinA family.

This chain is Protein APE_1980.1, found in Aeropyrum pernix (strain ATCC 700893 / DSM 11879 / JCM 9820 / NBRC 100138 / K1).